Consider the following 469-residue polypeptide: 6-phosphofructo-2-kinase/fructose-2,6-bisphosphatase 4 (469 aa).

The segment at 1–249 is 6-phosphofructo-2-kinase; that stretch reads MASPRELTQN…YYLMNIHVTP (249 aa). Phosphoserine; by PKC is present on Ser29. 46–54 serves as a coordination point for ATP; it reads GLPARGKTY. The beta-D-fructose 6-phosphate site is built by Arg79 and Arg103. The active site involves Asp129. Thr131 and Arg137 together coordinate beta-D-fructose 6-phosphate. Cys159 is an active-site residue. Position 168–173 (168–173) interacts with ATP; that stretch reads NIVQVK. 3 residues coordinate beta-D-fructose 6-phosphate: Lys173, Arg194, and Tyr198. Residues 250–469 are fructose-2,6-bisphosphatase; that stretch reads RSIYLCRHGE…EALVTVPAHQ (220 aa). A beta-D-fructose 2,6-bisphosphate-binding site is contributed by Arg256. The active-site Tele-phosphohistidine intermediate is the His257. The beta-D-fructose 2,6-bisphosphate site is built by Asn263, Gly269, and Arg306. Residue Glu326 is the Proton donor/acceptor of the active site. Residues Tyr337, Arg351, Lys355, Tyr366, Gln392, and Arg396 each contribute to the beta-D-fructose 2,6-bisphosphate site. Residue 348-351 participates in ATP binding; the sequence is FALR. ATP is bound by residues 392–396 and Tyr428; that span reads QAVMR. Thr444 carries the post-translational modification Phosphothreonine; by PKC.

This sequence in the C-terminal section; belongs to the phosphoglycerate mutase family. In terms of assembly, homodimer. Testis.

It catalyses the reaction beta-D-fructose 2,6-bisphosphate + H2O = beta-D-fructose 6-phosphate + phosphate. It carries out the reaction beta-D-fructose 6-phosphate + ATP = beta-D-fructose 2,6-bisphosphate + ADP + H(+). The most important regulatory mechanism of these opposing activities is by phosphorylation and dephosphorylation of the enzyme. In terms of biological role, synthesis and degradation of fructose 2,6-bisphosphate. This chain is 6-phosphofructo-2-kinase/fructose-2,6-bisphosphatase 4 (Pfkfb4), found in Rattus norvegicus (Rat).